The following is a 626-amino-acid chain: Procollagen galactosyltransferase 2 (626 aa).

The signal sequence occupies residues 1–27; sequence MAARPAATLAWSLLLLSSALLREGCRA. N-linked (GlcNAc...) asparagine glycosylation is found at asparagine 97, asparagine 185, asparagine 382, and asparagine 580. The tract at residues 604–626 is disordered; sequence NAKNTEALPPPTSLDTVPSRDEL. The short motif at 623–626 is the Prevents secretion from ER element; sequence RDEL.

Belongs to the glycosyltransferase 25 family. As to expression, expressed in brain and skeletal muscle.

It is found in the endoplasmic reticulum lumen. The enzyme catalyses (5R)-5-hydroxy-L-lysyl-[collagen] + UDP-alpha-D-galactose = (5R)-5-O-(beta-D-galactosyl)-5-hydroxy-L-lysyl-[collagen] + UDP + H(+). In terms of biological role, beta-galactosyltransferase that transfers beta-galactose to hydroxylysine residues of collagen. The polypeptide is Procollagen galactosyltransferase 2 (COLGALT2) (Homo sapiens (Human)).